We begin with the raw amino-acid sequence, 289 residues long: ATP synthase gamma chain (289 aa).

It belongs to the ATPase gamma chain family. As to quaternary structure, F-type ATPases have 2 components, CF(1) - the catalytic core - and CF(0) - the membrane proton channel. CF(1) has five subunits: alpha(3), beta(3), gamma(1), delta(1), epsilon(1). CF(0) has three main subunits: a, b and c.

The protein resides in the cell membrane. Produces ATP from ADP in the presence of a proton gradient across the membrane. The gamma chain is believed to be important in regulating ATPase activity and the flow of protons through the CF(0) complex. In Buchnera aphidicola subsp. Melaphis rhois, this protein is ATP synthase gamma chain.